We begin with the raw amino-acid sequence, 121 residues long: U15-barytoxin-Tl1b (121 aa).

A signal peptide spans 1 to 16 (MKLFMVLVASFAFAVA). Intrachain disulfides connect Cys-54–Cys-72, Cys-65–Cys-78, Cys-69–Cys-119, and Cys-71–Cys-90.

It belongs to the neurotoxin 03 (Tx2) family. 03 subfamily. In terms of tissue distribution, expressed by the venom gland.

It is found in the secreted. Ion channel inhibitor. In Trittame loki (Brush-footed trapdoor spider), this protein is U15-barytoxin-Tl1b.